A 2344-amino-acid chain; its full sequence is Peroxide stress-activated histidine kinase mak3 (2344 aa).

In terms of domain architecture, Protein kinase spans 1–295; it reads MYSQHELRNK…GIVNDLEACL (295 aa). 3 positions are modified to phosphoserine: Ser-12, Ser-16, and Ser-17. A compositionally biased stretch (polar residues) spans 486–503; that stretch reads SGNTRKTSLLGSNHSSYS. A disordered region spans residues 486-506; that stretch reads SGNTRKTSLLGSNHSSYSDKL. TPR repeat units follow at residues 829-862 and 1340-1373; these read CHYLHLAAEEALKIGANQEALDLYNRCIKMIPHE and AFAFETVGSIFVSMELYTSATQYLEEAIRNYAAL. A PAC domain is found at 1730–1781; that stretch reads FELEIRIKRKDGVYRWNLTRCTPTTNEKNRTSFLCATIDIDDQKKARATALE. The Histidine kinase domain occupies 1792 to 2018; the sequence is NISHELRTPF…TFKICYDLKI (227 aa). His-1795 carries the phosphohistidine; by autocatalysis modification. The Response regulatory domain maps to 2211–2333; it reads KILIAEDNPI…TLIKMLLQYL (123 aa). At Asp-2263 the chain carries 4-aspartylphosphate.

Its subcellular location is the cytoplasm. The enzyme catalyses ATP + protein L-histidine = ADP + protein N-phospho-L-histidine.. Its function is as follows. Involved in the control of the SAPK-dependent transcriptional response to peroxide stress. Regulates sty1 activity. This chain is Peroxide stress-activated histidine kinase mak3 (mak3), found in Schizosaccharomyces pombe (strain 972 / ATCC 24843) (Fission yeast).